The following is a 372-amino-acid chain: Tubby-like F-box protein 9 (372 aa).

Positions 1 to 51 (MALWRCSSSWLSSVSRSSGGVGGGESKVSPEIAPVSGGEGEGEEEEGEEER) are disordered. Positions 7-18 (SSSWLSSVSRSS) are enriched in low complexity. The span at 40–49 (GEGEEEEGEE) shows a compositional bias: acidic residues. In terms of domain architecture, F-box spans 50 to 105 (ERWSRLLPELLTEIMRRVDAGAERWPPRRDVVACACVCRRWRDAAVSVVRPPLECG).

Belongs to the TUB family. As to expression, ubiquitous.

This is Tubby-like F-box protein 9 (TULP9) from Oryza sativa subsp. japonica (Rice).